A 452-amino-acid polypeptide reads, in one-letter code: C4-dicarboxylate transport protein 1 (452 aa).

9 helical membrane-spanning segments follow: residues 18 to 38, 51 to 71, 83 to 103, 151 to 171, 191 to 211, 229 to 249, 304 to 324, 337 to 357, and 359 to 379; these read FQVV…PSVG, LIKM…IAGM, LALL…LLLV, AFAK…GFAL, VLFT…FGAM, LMGA…GAIA, GYSF…VFIA, ITLL…TGSG, and IVLA…LALI. A disordered region spans residues 426-452; it reads WEEAQEPERVLDKKTEHMPVSAMSDAG. Residues 431 to 442 are compositionally biased toward basic and acidic residues; that stretch reads EPERVLDKKTEH.

It belongs to the dicarboxylate/amino acid:cation symporter (DAACS) (TC 2.A.23) family.

It is found in the cell inner membrane. Functionally, responsible for the transport of dicarboxylates such as succinate, fumarate, and malate from the periplasm across the membrane. The protein is C4-dicarboxylate transport protein 1 of Polaromonas naphthalenivorans (strain CJ2).